The following is a 259-amino-acid chain: Dihydroorotate dehydrogenase B (NAD(+)), electron transfer subunit (259 aa).

Residues 2-102 (MQKQNMIVVN…LGPLGHGFPV (101 aa)) enclose the FAD-binding FR-type domain. FAD-binding positions include 53-56 (RPIS), 70-72 (LYR), and 77-78 (GT). 4 residues coordinate [2Fe-2S] cluster: C221, C226, C229, and C246.

The protein belongs to the PyrK family. In terms of assembly, heterotetramer of 2 PyrK and 2 PyrD type B subunits. It depends on [2Fe-2S] cluster as a cofactor. FAD serves as cofactor.

Its pathway is pyrimidine metabolism; UMP biosynthesis via de novo pathway; orotate from (S)-dihydroorotate (NAD(+) route): step 1/1. Functionally, responsible for channeling the electrons from the oxidation of dihydroorotate from the FMN redox center in the PyrD type B subunit to the ultimate electron acceptor NAD(+). This Bacillus cereus (strain 03BB102) protein is Dihydroorotate dehydrogenase B (NAD(+)), electron transfer subunit.